A 136-amino-acid polypeptide reads, in one-letter code: Holo-[acyl-carrier-protein] synthase (136 aa).

Asp-8 and Glu-62 together coordinate Mg(2+).

The protein belongs to the P-Pant transferase superfamily. AcpS family. The cofactor is Mg(2+).

Its subcellular location is the cytoplasm. The catalysed reaction is apo-[ACP] + CoA = holo-[ACP] + adenosine 3',5'-bisphosphate + H(+). In terms of biological role, transfers the 4'-phosphopantetheine moiety from coenzyme A to a Ser of acyl-carrier-protein. This is Holo-[acyl-carrier-protein] synthase from Polynucleobacter necessarius subsp. necessarius (strain STIR1).